The chain runs to 440 residues: Thymidine phosphorylase (440 aa).

The protein belongs to the thymidine/pyrimidine-nucleoside phosphorylase family. As to quaternary structure, homodimer.

It catalyses the reaction thymidine + phosphate = 2-deoxy-alpha-D-ribose 1-phosphate + thymine. The protein operates within pyrimidine metabolism; dTMP biosynthesis via salvage pathway; dTMP from thymine: step 1/2. The enzymes which catalyze the reversible phosphorolysis of pyrimidine nucleosides are involved in the degradation of these compounds and in their utilization as carbon and energy sources, or in the rescue of pyrimidine bases for nucleotide synthesis. In Yersinia pestis, this protein is Thymidine phosphorylase.